A 220-amino-acid chain; its full sequence is Deoxyribose-phosphate aldolase (220 aa).

The Proton donor/acceptor role is filled by Asp89. Lys151 acts as the Schiff-base intermediate with acetaldehyde in catalysis. Lys180 acts as the Proton donor/acceptor in catalysis.

It belongs to the DeoC/FbaB aldolase family. DeoC type 1 subfamily.

The protein resides in the cytoplasm. The catalysed reaction is 2-deoxy-D-ribose 5-phosphate = D-glyceraldehyde 3-phosphate + acetaldehyde. It participates in carbohydrate degradation; 2-deoxy-D-ribose 1-phosphate degradation; D-glyceraldehyde 3-phosphate and acetaldehyde from 2-deoxy-alpha-D-ribose 1-phosphate: step 2/2. Functionally, catalyzes a reversible aldol reaction between acetaldehyde and D-glyceraldehyde 3-phosphate to generate 2-deoxy-D-ribose 5-phosphate. The chain is Deoxyribose-phosphate aldolase from Staphylococcus epidermidis (strain ATCC 35984 / DSM 28319 / BCRC 17069 / CCUG 31568 / BM 3577 / RP62A).